Consider the following 196-residue polypeptide: Molybdenum cofactor guanylyltransferase (196 aa).

Residues 14 to 16 (LAG), lysine 27, aspartate 73, and aspartate 106 contribute to the GTP site. Position 106 (aspartate 106) interacts with Mg(2+).

It belongs to the MobA family. As to quaternary structure, monomer. The cofactor is Mg(2+).

Its subcellular location is the cytoplasm. The catalysed reaction is Mo-molybdopterin + GTP + H(+) = Mo-molybdopterin guanine dinucleotide + diphosphate. Functionally, transfers a GMP moiety from GTP to Mo-molybdopterin (Mo-MPT) cofactor (Moco or molybdenum cofactor) to form Mo-molybdopterin guanine dinucleotide (Mo-MGD) cofactor. The protein is Molybdenum cofactor guanylyltransferase of Acidiphilium cryptum (strain JF-5).